We begin with the raw amino-acid sequence, 562 residues long: 63 kDa globulin-like protein (562 aa).

A signal peptide spans 1–23 (MATRARATILLLLAAVLFAAAAA). Positions 63–88 (QQQQERRREHGGHDDDRRDRDRRGEG) are enriched in basic and acidic residues. The segment at 63–103 (QQQQERRREHGGHDDDRRDRDRRGEGSSEEEDEGRERGSRR) is disordered. Cupin type-1 domains lie at 106–264 (YVFG…EKLE) and 312–507 (FNIL…REVD). N-linked (GlcNAc...) asparagine glycosylation occurs at Asn-350. 2 disordered regions span residues 383-430 (PHLS…QVGQ) and 516-550 (SAFLAGPEKSGRRGEESEDEDRRRRRSHRGRGDEA). Basic and acidic residues predominate over residues 390 to 408 (RGGESEERRRERGKGKWRE). Acidic residues predominate over residues 409–427 (EEEEEEEQQKGQEEEEEEQ).

The protein belongs to the 7S seed storage protein family.

It localises to the secreted. Seed storage protein. This chain is 63 kDa globulin-like protein, found in Oryza sativa subsp. japonica (Rice).